Consider the following 270-residue polypeptide: 4-hydroxy-tetrahydrodipicolinate reductase (270 aa).

Residues 9-14 and Glu-35 each bind NAD(+); that span reads GAGGRM. Position 36 (Arg-36) interacts with NADP(+). NAD(+)-binding positions include 99–101 and 123–126; these read GTT and ASNY. His-156 acts as the Proton donor/acceptor in catalysis. His-157 contributes to the (S)-2,3,4,5-tetrahydrodipicolinate binding site. Residue Lys-160 is the Proton donor of the active site. Position 166-167 (166-167) interacts with (S)-2,3,4,5-tetrahydrodipicolinate; it reads GT.

The protein belongs to the DapB family.

The protein localises to the cytoplasm. The catalysed reaction is (S)-2,3,4,5-tetrahydrodipicolinate + NAD(+) + H2O = (2S,4S)-4-hydroxy-2,3,4,5-tetrahydrodipicolinate + NADH + H(+). It carries out the reaction (S)-2,3,4,5-tetrahydrodipicolinate + NADP(+) + H2O = (2S,4S)-4-hydroxy-2,3,4,5-tetrahydrodipicolinate + NADPH + H(+). Its pathway is amino-acid biosynthesis; L-lysine biosynthesis via DAP pathway; (S)-tetrahydrodipicolinate from L-aspartate: step 4/4. In terms of biological role, catalyzes the conversion of 4-hydroxy-tetrahydrodipicolinate (HTPA) to tetrahydrodipicolinate. The polypeptide is 4-hydroxy-tetrahydrodipicolinate reductase (Actinobacillus succinogenes (strain ATCC 55618 / DSM 22257 / CCUG 43843 / 130Z)).